The primary structure comprises 335 residues: Thioredoxin reductase (335 aa).

Residues 22–25, 44–51, asparagine 60, and valine 93 each bind FAD; these read SGPA and EGTSFGGA. Cysteines 145 and 148 form a disulfide. NADP(+) is bound by residues serine 166, histidine 185, arginine 191, isoleucine 248, and tyrosine 268. FAD is bound by residues aspartate 288 and 295 to 298; that span reads RQAV. Arginine 295 serves as a coordination point for NADP(+).

Belongs to the class-II pyridine nucleotide-disulfide oxidoreductase family. As to quaternary structure, homodimer. The cofactor is FAD.

The protein resides in the cytoplasm. The enzyme catalyses [thioredoxin]-dithiol + NADP(+) = [thioredoxin]-disulfide + NADPH + H(+). The chain is Thioredoxin reductase from Mycobacterium tuberculosis (strain CDC 1551 / Oshkosh).